The following is a 400-amino-acid chain: Lipase member N (400 aa).

A signal peptide spans 1-19; it reads MPMMWLFLTTACLIPGTLS. The AB hydrolase-1 domain maps to 81–381; sequence PVVYMQHALF…DWNHFDFVWG (301 aa). Serine 175 acts as the Nucleophile in catalysis. Residues cysteine 249 and cysteine 258 are joined by a disulfide bond. N-linked (GlcNAc...) asparagine glycosylation occurs at asparagine 274. Catalysis depends on charge relay system residues aspartate 346 and histidine 375.

This sequence belongs to the AB hydrolase superfamily. Lipase family. As to expression, highly expressed in the epidermis. Also detected in other tissues, although at much lower levels, including liver and kidney.

It is found in the secreted. The enzyme catalyses a sterol ester + H2O = a sterol + a fatty acid + H(+). It catalyses the reaction a triacylglycerol + H2O = a 1,2-diacylglycerol + a fatty acid + H(+). The catalysed reaction is a triacylglycerol + H2O = a diacylglycerol + a fatty acid + H(+). It carries out the reaction a cholesterol ester + H2O = cholesterol + a fatty acid + H(+). Its function is as follows. Plays a highly specific role in the last step of keratinocyte differentiation. Contains two distinct domains: the alpha/beta hydrolase fold and the abhydrolase-associated lipase region, also features the consensus sequence of the active site of a genuine lipase. May have an essential function in lipid metabolism of the most differentiated epidermal layers. This chain is Lipase member N (Lipn), found in Mus musculus (Mouse).